The primary structure comprises 248 residues: Phosphatidylglycerol--prolipoprotein diacylglyceryl transferase (248 aa).

3 helical membrane passes run 6-26 (FSIFGIDIMWYGILITLGVIL), 48-68 (ILVWALPLAIVGARAYYVIFE), and 84-104 (GGGLAIYGGIIAAVITCYVIC). Residue Arg-130 participates in a 1,2-diacyl-sn-glycero-3-phospho-(1'-sn-glycerol) binding. The next 2 helical transmembrane spans lie at 187–207 (GQITSMYMILYGILRFFVEGL) and 214–234 (IGALRVSQLVSIAIIIAGVIL).

It belongs to the Lgt family.

It localises to the cell membrane. The catalysed reaction is L-cysteinyl-[prolipoprotein] + a 1,2-diacyl-sn-glycero-3-phospho-(1'-sn-glycerol) = an S-1,2-diacyl-sn-glyceryl-L-cysteinyl-[prolipoprotein] + sn-glycerol 1-phosphate + H(+). It functions in the pathway protein modification; lipoprotein biosynthesis (diacylglyceryl transfer). Functionally, catalyzes the transfer of the diacylglyceryl group from phosphatidylglycerol to the sulfhydryl group of the N-terminal cysteine of a prolipoprotein, the first step in the formation of mature lipoproteins. The polypeptide is Phosphatidylglycerol--prolipoprotein diacylglyceryl transferase (Finegoldia magna (strain ATCC 29328 / DSM 20472 / WAL 2508) (Peptostreptococcus magnus)).